Reading from the N-terminus, the 658-residue chain is UvrABC system protein B (658 aa).

Positions 26 to 414 (AGLKKGLKHQ…PDVIEQIIRP (389 aa)) constitute a Helicase ATP-binding domain. Residue 39 to 46 (GATGTGKT) participates in ATP binding. The Beta-hairpin signature appears at 92-115 (YYDYYQPEAYVPQSDTYIEKDASI). The region spanning 430–592 (QIDDLMDEIN…ITPKTIRKEI (163 aa)) is the Helicase C-terminal domain. A UVR domain is found at 622-658 (DIFIEGMEHEMKEAAKALDFERAAELRDALLEIKAEG).

Belongs to the UvrB family. In terms of assembly, forms a heterotetramer with UvrA during the search for lesions. Interacts with UvrC in an incision complex.

The protein localises to the cytoplasm. Functionally, the UvrABC repair system catalyzes the recognition and processing of DNA lesions. A damage recognition complex composed of 2 UvrA and 2 UvrB subunits scans DNA for abnormalities. Upon binding of the UvrA(2)B(2) complex to a putative damaged site, the DNA wraps around one UvrB monomer. DNA wrap is dependent on ATP binding by UvrB and probably causes local melting of the DNA helix, facilitating insertion of UvrB beta-hairpin between the DNA strands. Then UvrB probes one DNA strand for the presence of a lesion. If a lesion is found the UvrA subunits dissociate and the UvrB-DNA preincision complex is formed. This complex is subsequently bound by UvrC and the second UvrB is released. If no lesion is found, the DNA wraps around the other UvrB subunit that will check the other stand for damage. The chain is UvrABC system protein B from Listeria innocua serovar 6a (strain ATCC BAA-680 / CLIP 11262).